Consider the following 211-residue polypeptide: Ribosomal RNA small subunit methyltransferase G (211 aa).

S-adenosyl-L-methionine-binding positions include Gly81, Leu86, 132–133 (AE), and Arg147.

The protein belongs to the methyltransferase superfamily. RNA methyltransferase RsmG family.

Its subcellular location is the cytoplasm. It carries out the reaction guanosine(527) in 16S rRNA + S-adenosyl-L-methionine = N(7)-methylguanosine(527) in 16S rRNA + S-adenosyl-L-homocysteine. In terms of biological role, specifically methylates the N7 position of guanine in position 527 of 16S rRNA. The chain is Ribosomal RNA small subunit methyltransferase G from Dichelobacter nodosus (strain VCS1703A).